The following is a 210-amino-acid chain: Cytidylate kinase (210 aa).

Residue G7–T15 coordinates ATP.

It belongs to the cytidylate kinase family. Type 1 subfamily.

The protein resides in the cytoplasm. The catalysed reaction is CMP + ATP = CDP + ADP. It carries out the reaction dCMP + ATP = dCDP + ADP. This is Cytidylate kinase from Methylobacterium sp. (strain 4-46).